The sequence spans 353 residues: Dihydroorotate dehydrogenase (quinone) (353 aa).

FMN contacts are provided by residues Ala66 to Lys70 and Thr90. Lys70 is a binding site for substrate. Asn115–Phe119 provides a ligand contact to substrate. The FMN site is built by Asn143 and Asn176. Asn176 contacts substrate. Ser179 functions as the Nucleophile in the catalytic mechanism. Asn181 contacts substrate. Residues Lys212 and Thr240 each contribute to the FMN site. Asn241–Thr242 is a binding site for substrate. Residues Gly264, Gly293, and Tyr314 to Thr315 each bind FMN.

This sequence belongs to the dihydroorotate dehydrogenase family. Type 2 subfamily. In terms of assembly, monomer. FMN serves as cofactor.

It localises to the cell membrane. It catalyses the reaction (S)-dihydroorotate + a quinone = orotate + a quinol. Its pathway is pyrimidine metabolism; UMP biosynthesis via de novo pathway; orotate from (S)-dihydroorotate (quinone route): step 1/1. Functionally, catalyzes the conversion of dihydroorotate to orotate with quinone as electron acceptor. The protein is Dihydroorotate dehydrogenase (quinone) of Mycolicibacterium gilvum (strain PYR-GCK) (Mycobacterium gilvum (strain PYR-GCK)).